A 77-amino-acid polypeptide reads, in one-letter code: U8-lycotoxin-Ls1e (77 aa).

The first 20 residues, 1 to 20 (MKLIIFTGLVLFAIVSLIEA), serve as a signal peptide directing secretion. The propeptide occupies 21–26 (QAENEK).

Belongs to the neurotoxin 19 (CSTX) family. 08 (U8-Lctx) subfamily. Contains 4 disulfide bonds. As to expression, expressed by the venom gland.

The protein localises to the secreted. This chain is U8-lycotoxin-Ls1e, found in Lycosa singoriensis (Wolf spider).